The following is a 589-amino-acid chain: Probable galacturonosyltransferase 6 (589 aa).

Topologically, residues methionine 1 to arginine 6 are cytoplasmic. Residues tryptophan 7–valine 27 traverse the membrane as a helical; Signal-anchor for type II membrane protein segment. Residues serine 28–alanine 589 are Lumenal-facing. N-linked (GlcNAc...) asparagine glycosylation is found at asparagine 83 and asparagine 126. The interval lysine 127–valine 151 is disordered. Residues lysine 136–valine 151 are compositionally biased toward basic and acidic residues. N-linked (GlcNAc...) asparagine glycans are attached at residues asparagine 317 and asparagine 454.

It belongs to the glycosyltransferase 8 family. Expressed in roots, inflorescences, siliques, leaves and stems.

It localises to the golgi apparatus membrane. The protein operates within glycan metabolism; pectin biosynthesis. Functionally, probably involved in pectin biosynthesis in cell walls. The chain is Probable galacturonosyltransferase 6 (GAUT6) from Arabidopsis thaliana (Mouse-ear cress).